Consider the following 390-residue polypeptide: Phosphopentomutase (390 aa).

Residues Asp14, Asp286, His291, Asp327, His328, and His339 each coordinate Mn(2+).

Belongs to the phosphopentomutase family. Requires Mn(2+) as cofactor.

The protein resides in the cytoplasm. It catalyses the reaction 2-deoxy-alpha-D-ribose 1-phosphate = 2-deoxy-D-ribose 5-phosphate. The catalysed reaction is alpha-D-ribose 1-phosphate = D-ribose 5-phosphate. It participates in carbohydrate degradation; 2-deoxy-D-ribose 1-phosphate degradation; D-glyceraldehyde 3-phosphate and acetaldehyde from 2-deoxy-alpha-D-ribose 1-phosphate: step 1/2. Its function is as follows. Isomerase that catalyzes the conversion of deoxy-ribose 1-phosphate (dRib-1-P) and ribose 1-phosphate (Rib-1-P) to deoxy-ribose 5-phosphate (dRib-5-P) and ribose 5-phosphate (Rib-5-P), respectively. This is Phosphopentomutase from Exiguobacterium sibiricum (strain DSM 17290 / CCUG 55495 / CIP 109462 / JCM 13490 / 255-15).